The chain runs to 412 residues: CCA-adding enzyme (412 aa).

ATP contacts are provided by serine 41 and lysine 44. Serine 41 and lysine 44 together coordinate CTP. Mg(2+)-binding residues include aspartate 53, aspartate 55, and aspartate 106. Residues histidine 129, lysine 149, and tyrosine 158 each contribute to the ATP site. CTP is bound by residues histidine 129, lysine 149, and tyrosine 158.

It belongs to the tRNA nucleotidyltransferase/poly(A) polymerase family. Archaeal CCA-adding enzyme subfamily. Homodimer. It depends on Mg(2+) as a cofactor.

The enzyme catalyses a tRNA precursor + 2 CTP + ATP = a tRNA with a 3' CCA end + 3 diphosphate. It carries out the reaction a tRNA with a 3' CCA end + 2 CTP + ATP = a tRNA with a 3' CCACCA end + 3 diphosphate. Its function is as follows. Catalyzes the addition and repair of the essential 3'-terminal CCA sequence in tRNAs without using a nucleic acid template. Adds these three nucleotides in the order of C, C, and A to the tRNA nucleotide-73, using CTP and ATP as substrates and producing inorganic pyrophosphate. tRNA 3'-terminal CCA addition is required both for tRNA processing and repair. Also involved in tRNA surveillance by mediating tandem CCA addition to generate a CCACCA at the 3' terminus of unstable tRNAs. While stable tRNAs receive only 3'-terminal CCA, unstable tRNAs are marked with CCACCA and rapidly degraded. The polypeptide is CCA-adding enzyme (Saccharolobus islandicus (strain M.16.27) (Sulfolobus islandicus)).